We begin with the raw amino-acid sequence, 445 residues long: GTPase Der (445 aa).

EngA-type G domains are found at residues 3–167 and 180–353; these read PVIA…YADQ and IKIA…AAAM. GTP contacts are provided by residues 9–16, 56–60, 119–122, 186–193, 233–237, and 298–301; these read GRPNVGKS, DTGGF, NKAE, DTAGL, and NKWD. Residues 354 to 438 enclose the KH-like domain; it reads AKLPTPKLTR…PLRIEFRSST (85 aa).

The protein belongs to the TRAFAC class TrmE-Era-EngA-EngB-Septin-like GTPase superfamily. EngA (Der) GTPase family. In terms of assembly, associates with the 50S ribosomal subunit.

GTPase that plays an essential role in the late steps of ribosome biogenesis. This Burkholderia multivorans (strain ATCC 17616 / 249) protein is GTPase Der.